We begin with the raw amino-acid sequence, 395 residues long: Acetate kinase (395 aa).

Position 7 (Asn-7) interacts with Mg(2+). Residue Lys-14 coordinates ATP. Arg-88 is a substrate binding site. The Proton donor/acceptor role is filled by Asp-145. ATP contacts are provided by residues 205–209 (HLGNG), 279–281 (DFR), and 327–331 (GIGEN). Residue Glu-381 coordinates Mg(2+).

Belongs to the acetokinase family. As to quaternary structure, homodimer. Mg(2+) is required as a cofactor. It depends on Mn(2+) as a cofactor.

Its subcellular location is the cytoplasm. The enzyme catalyses acetate + ATP = acetyl phosphate + ADP. Its pathway is metabolic intermediate biosynthesis; acetyl-CoA biosynthesis; acetyl-CoA from acetate: step 1/2. Its function is as follows. Catalyzes the formation of acetyl phosphate from acetate and ATP. Can also catalyze the reverse reaction. The sequence is that of Acetate kinase from Campylobacter jejuni subsp. jejuni serotype O:6 (strain 81116 / NCTC 11828).